The chain runs to 212 residues: Probable nicotinate-nucleotide adenylyltransferase (212 aa).

Belongs to the NadD family.

It carries out the reaction nicotinate beta-D-ribonucleotide + ATP + H(+) = deamido-NAD(+) + diphosphate. The protein operates within cofactor biosynthesis; NAD(+) biosynthesis; deamido-NAD(+) from nicotinate D-ribonucleotide: step 1/1. Catalyzes the reversible adenylation of nicotinate mononucleotide (NaMN) to nicotinic acid adenine dinucleotide (NaAD). This is Probable nicotinate-nucleotide adenylyltransferase from Shewanella sp. (strain ANA-3).